The chain runs to 140 residues: UPF0654 protein C22G7.11c (140 aa).

Disordered stretches follow at residues 1-88 (MPDP…DPMK) and 110-140 (YKAT…ETQA). Positions 24-33 (AKERAEDYIE) are enriched in basic and acidic residues. The span at 34–44 (SHSSGQETGDY) shows a compositional bias: polar residues. Positions 54 to 71 (DYEDLGDYDEDADFDNEE) are enriched in acidic residues.

This sequence belongs to the UPF0654 (con-6) family.

This chain is UPF0654 protein C22G7.11c, found in Schizosaccharomyces pombe (strain 972 / ATCC 24843) (Fission yeast).